A 352-amino-acid chain; its full sequence is Putative killer cell immunoglobulin-like receptor-like protein KIR3DX1 (352 aa).

Positions 1-16 (MAPKLITVLCLGFCLN) are cleaved as a signal peptide. 2 Ig-like C2-type domains span residues 17 to 112 (QKIC…NSLK) and 224 to 311 (PSLS…VTRC). 2 disulfide bridges follow: Cys-49-Cys-94 and Cys-244-Cys-295. Residue Asn-78 is glycosylated (N-linked (GlcNAc...) asparagine).

Expressed in NK-cells.

It is found in the secreted. The polypeptide is Putative killer cell immunoglobulin-like receptor-like protein KIR3DX1 (KIR3DX1) (Homo sapiens (Human)).